Reading from the N-terminus, the 105-residue chain is Putative neurotoxin 10 (105 aa).

The signal sequence occupies residues 1-21 (MTVSCSKVLLSLCLFLILLEA).

It belongs to the scolopendra neurotoxin 10 family. Contains 3 disulfide bonds. Expressed by the venom gland.

Its subcellular location is the secreted. The polypeptide is Putative neurotoxin 10 (Scolopendra mutilans (Chinese red-headed centipede)).